Here is a 310-residue protein sequence, read N- to C-terminus: tRNA dimethylallyltransferase (310 aa).

An ATP-binding site is contributed by 11 to 18; sequence GPTAVGKT. Residue 13–18 coordinates substrate; it reads TAVGKT. An interaction with substrate tRNA region spans residues 36–39; that stretch reads DSMQ.

Belongs to the IPP transferase family. In terms of assembly, monomer. Mg(2+) serves as cofactor.

The catalysed reaction is adenosine(37) in tRNA + dimethylallyl diphosphate = N(6)-dimethylallyladenosine(37) in tRNA + diphosphate. Functionally, catalyzes the transfer of a dimethylallyl group onto the adenine at position 37 in tRNAs that read codons beginning with uridine, leading to the formation of N6-(dimethylallyl)adenosine (i(6)A). The polypeptide is tRNA dimethylallyltransferase (Shouchella clausii (strain KSM-K16) (Alkalihalobacillus clausii)).